The following is a 54-amino-acid chain: ATP synthase protein 8 (54 aa).

Residues 9–29 (WIINFFIVWTADFTLLIVLSI) form a helical membrane-spanning segment.

It belongs to the ATPase protein 8 family. F-type ATPases have 2 components, CF(1) - the catalytic core - and CF(0) - the membrane proton channel.

The protein localises to the mitochondrion membrane. Its function is as follows. Mitochondrial membrane ATP synthase (F(1)F(0) ATP synthase or Complex V) produces ATP from ADP in the presence of a proton gradient across the membrane which is generated by electron transport complexes of the respiratory chain. F-type ATPases consist of two structural domains, F(1) - containing the extramembraneous catalytic core and F(0) - containing the membrane proton channel, linked together by a central stalk and a peripheral stalk. During catalysis, ATP synthesis in the catalytic domain of F(1) is coupled via a rotary mechanism of the central stalk subunits to proton translocation. Part of the complex F(0) domain. Minor subunit located with subunit a in the membrane. This Arbacia lixula (Black urchin) protein is ATP synthase protein 8 (MT-ATP8).